A 229-amino-acid chain; its full sequence is Cytochrome c oxidase subunit 2 (229 aa).

Over 1 to 26 (MSTWANLGLQDSASPLMEQLIFFHDH) the chain is Mitochondrial intermembrane. The helical transmembrane segment at 27 to 48 (ALLILVMITILVGYLMFMLFFN) threads the bilayer. The Mitochondrial matrix portion of the chain corresponds to 49-62 (SYINRFLLHGQLIE). The chain crosses the membrane as a helical span at residues 63-82 (MIWTILPAIILLFIAMPSLR). At 83–229 (LLYLLDEINE…IKWIASKVNS (147 aa)) the chain is on the mitochondrial intermembrane side. Cu cation contacts are provided by H161, C196, E198, C200, H204, and M207. E198 is a binding site for Mg(2+).

The protein belongs to the cytochrome c oxidase subunit 2 family. Component of the cytochrome c oxidase (complex IV, CIV), a multisubunit enzyme composed of a catalytic core of 3 subunits and several supernumerary subunits. The complex exists as a monomer or a dimer and forms supercomplexes (SCs) in the inner mitochondrial membrane with ubiquinol-cytochrome c oxidoreductase (cytochrome b-c1 complex, complex III, CIII). It depends on Cu cation as a cofactor.

The protein resides in the mitochondrion inner membrane. It catalyses the reaction 4 Fe(II)-[cytochrome c] + O2 + 8 H(+)(in) = 4 Fe(III)-[cytochrome c] + 2 H2O + 4 H(+)(out). Its function is as follows. Component of the cytochrome c oxidase, the last enzyme in the mitochondrial electron transport chain which drives oxidative phosphorylation. The respiratory chain contains 3 multisubunit complexes succinate dehydrogenase (complex II, CII), ubiquinol-cytochrome c oxidoreductase (cytochrome b-c1 complex, complex III, CIII) and cytochrome c oxidase (complex IV, CIV), that cooperate to transfer electrons derived from NADH and succinate to molecular oxygen, creating an electrochemical gradient over the inner membrane that drives transmembrane transport and the ATP synthase. Cytochrome c oxidase is the component of the respiratory chain that catalyzes the reduction of oxygen to water. Electrons originating from reduced cytochrome c in the intermembrane space (IMS) are transferred via the dinuclear copper A center (CU(A)) of subunit 2 and heme A of subunit 1 to the active site in subunit 1, a binuclear center (BNC) formed by heme A3 and copper B (CU(B)). The BNC reduces molecular oxygen to 2 water molecules using 4 electrons from cytochrome c in the IMS and 4 protons from the mitochondrial matrix. The sequence is that of Cytochrome c oxidase subunit 2 (mt:CoII) from Drosophila bifasciata (Fruit fly).